A 236-amino-acid polypeptide reads, in one-letter code: EF-hand domain-containing protein D1 (236 aa).

Residues 1 to 48 (MASEELASKLQRRLQWEEGDSGLQPAPGAAPDPEPQPQPPAWAPTARA) are disordered. Pro residues predominate over residues 28 to 42 (GAAPDPEPQPQPPAW). 2 consecutive EF-hand domains span residues 87-122 (RLIKDLESMFKLYDAGRDGFIDLMELKLMMEKLGAP) and 123-158 (QTHLGLKSMIKEVDEDFDGKLSFREFLLIFHKAAAG). Positions 100, 104, 111, 136, 138, 140, 142, and 147 each coordinate Ca(2+).

It localises to the mitochondrion inner membrane. Its function is as follows. Acts as a calcium sensor for mitochondrial flash (mitoflash) activation, an event characterized by stochastic bursts of superoxide production. May play a role in neuronal differentiation. The protein is EF-hand domain-containing protein D1 (EFHD1) of Bos taurus (Bovine).